The following is a 288-amino-acid chain: MAFSGSSRTLTQQSSAASTDDLHKILFSPEAIKEMATKCDLGRHHWLRADDAVCVRPLVPETTSNKVAQWFKTGYEAGKLPSKGYMIIPQVLCAVTRTVTSNAEGSLEIYLADLGDVELAPIDDQVVTLHNRDLPALISFQPTYDCPMEKVGDRSRCFAVVIKRHGYLGHPGSTASVCSNWQPKFSSKNNNYKPAAAGKTLVLPYNRLSELSGPSAVVRLLKSQLNMQSSPLFQLPGGPIMQKAIGSEREEGLNCKRKLPLEEVCTTSRDSVSSRPSVVNGIERPGTL.

Belongs to the cucumovirus movement protein family.

It is found in the host cell junction. Its subcellular location is the host plasmodesma. Functionally, transports viral genome to neighboring plant cells directly through plasmosdesmata, without any budding. The movement protein allows efficient cell to cell propagation, by bypassing the host cell wall barrier. Acts by forming a tubular structure at the host plasmodesmata, enlarging it enough to allow free passage of virion capsids. The polypeptide is Movement protein (Apium graveolens (Celery)).